A 293-amino-acid chain; its full sequence is Exosome complex component RRP4 (293 aa).

Residues 79–159 enclose the S1 motif domain; sequence EVGDIVVGRI…SDGAVSLHTR (81 aa). Serine 124 bears the Phosphoserine mark.

The protein belongs to the RRP4 family. As to quaternary structure, component of the RNA exosome core complex (Exo-9), composed of EXOSC1, EXOSC2, EXOSC3, EXOSC4, EXOSC5, EXOSC6, EXOSC7, EXOSC8 and EXOSC9; within the complex interacts with EXOSC4 and EXOSC7. The catalytically inactive RNA exosome core complex (Exo-9) associates with the catalytic subunit EXOSC10/RRP6. Exo-9 may associate with DIS3 to form the nucleolar exosome complex, or DIS3L to form the cytoplasmic exosome complex. Exo-9 is formed by a hexameric base ring consisting of the heterodimers EXOSC4-EXOSC9, EXOSC5-EXOSC8 and EXOSC6-EXOSC7, and a cap ring consisting of EXOSC1, EXOSC2 and EXOSC3. The RNA exosome complex associates with cofactors C1D/RRP47, MPHOSPH6/MPP6 and MTREX/MTR4. Interacts with GTPBP1. Interacts with ZFP36L1 (via N-terminus).

The protein localises to the cytoplasm. Its subcellular location is the nucleus. It is found in the nucleolus. Functionally, non-catalytic component of the RNA exosome complex which has 3'-&gt;5' exoribonuclease activity and participates in a multitude of cellular RNA processing and degradation events. In the nucleus, the RNA exosome complex is involved in proper maturation of stable RNA species such as rRNA, snRNA and snoRNA, in the elimination of RNA processing by-products and non-coding 'pervasive' transcripts, such as antisense RNA species and promoter-upstream transcripts (PROMPTs), and of mRNAs with processing defects, thereby limiting or excluding their export to the cytoplasm. The RNA exosome may be involved in Ig class switch recombination (CSR) and/or Ig variable region somatic hypermutation (SHM) by targeting AICDA deamination activity to transcribed dsDNA substrates. In the cytoplasm, the RNA exosome complex is involved in general mRNA turnover and specifically degrades inherently unstable mRNAs containing AU-rich elements (AREs) within their 3' untranslated regions, and in RNA surveillance pathways, preventing translation of aberrant mRNAs. It seems to be involved in degradation of histone mRNA. The catalytic inactive RNA exosome core complex of 9 subunits (Exo-9) is proposed to play a pivotal role in the binding and presentation of RNA for ribonucleolysis, and to serve as a scaffold for the association with catalytic subunits and accessory proteins or complexes. EXOSC2 as peripheral part of the Exo-9 complex stabilizes the hexameric ring of RNase PH-domain subunits through contacts with EXOSC4 and EXOSC7. This Homo sapiens (Human) protein is Exosome complex component RRP4.